Consider the following 478-residue polypeptide: Solute carrier family 7 member 13 (478 aa).

Residues 1–14 (MAMDSKKEIRLKRE) lie on the Cytoplasmic side of the membrane. A helical transmembrane segment spans residues 15-35 (LGYFWGTNFLIINIIGAGIFV). At 36-47 (SPKGVLQHSSMN) the chain is on the extracellular side. Residues 48-68 (VGVSLCVWAVCAVLTLTSALC) form a helical membrane-spanning segment. The Cytoplasmic segment spans residues 69 to 89 (SAEIGITFPYSGAHYYFLKRC). A helical transmembrane segment spans residues 90-110 (FGPLVAFLRLWTSLFLGPGLI). Over 111 to 129 (ASQALLLAEYGVQPFYPSC) the chain is Extracellular. Residues 130–150 (SAPILPRKCLALAMLWIVGIL) form a helical membrane-spanning segment. At 151–163 (NSRGVKELSWLQT) the chain is on the cytoplasmic side. A helical transmembrane segment spans residues 164–184 (VSSVLKVGILGVISLSGLFLL). The Extracellular segment spans residues 185 to 208 (VRGKKENVQRLQNAFDAEFPEVSQ). Residues 209-229 (LIEAIFQGYFAFSGGGCFTCI) traverse the membrane as a helical segment. Residues 230-242 (AGELKKPSKTIPR) lie on the Cytoplasmic side of the membrane. Residues 243–263 (CIFTGLPLVTVVYLLANISYL) traverse the membrane as a helical segment. Over 264–288 (TVLTPQEMLSSDAVALTWTDRVIPQ) the chain is Extracellular. Residues 289–309 (FTWTVPFAISASLFINLVINV) form a helical membrane-spanning segment. The Cytoplasmic portion of the chain corresponds to 310 to 338 (LETSRVLYIASENGQLPLLFCALNVHSSP). A helical membrane pass occupies residues 339–359 (FIAVLLIISMASILIVLTNLI). Residue Asp360 is a topological domain, extracellular. The chain crosses the membrane as a helical span at residues 361-381 (LINYLYFVVSIWTALSIIGIL). Topologically, residues 382–395 (KLRYQEPNLHRPYK) are cytoplasmic. A helical membrane pass occupies residues 396 to 416 (VFLPFTFIALGITLSLVLIPL). Topologically, residues 417-423 (VKSPKLH) are extracellular. The chain crosses the membrane as a helical span at residues 424–444 (YIYVFLFLLSGLVFYVPLIHF). Residues 445–478 (KVKFVWFQKLTCYLQLLFNICIPDVSDDHIHEES) lie on the Cytoplasmic side of the membrane.

Belongs to the amino acid-polyamine-organocation (APC) superfamily. As to quaternary structure, disulfide-linked heterodimer composed of the catalytic light subunit SLC7A13 and the heavy subunit SLC3A1. As to expression, expressed in renal tubules in the outer stripe of the outer medulla and medullary ray (at protein level). Detected in male but not in female kidney.

Its subcellular location is the apical cell membrane. It catalyses the reaction L-cystine(out) + L-aspartate(in) = L-cystine(in) + L-aspartate(out). The enzyme catalyses L-cystine(out) = L-cystine(in). The catalysed reaction is L-aspartate(in) + L-glutamate(out) = L-aspartate(out) + L-glutamate(in). It carries out the reaction L-aspartate(in) + L-glutamine(out) = L-aspartate(out) + L-glutamine(in). It catalyses the reaction L-aspartate(in) + L-methionine(out) = L-aspartate(out) + L-methionine(in). The enzyme catalyses L-leucine(out) + L-aspartate(in) = L-leucine(in) + L-aspartate(out). The catalysed reaction is L-valine(out) + L-aspartate(in) = L-valine(in) + L-aspartate(out). It carries out the reaction L-aspartate(in) + L-phenylalanine(out) = L-aspartate(out) + L-phenylalanine(in). It catalyses the reaction L-tyrosine(out) + L-aspartate(in) = L-tyrosine(in) + L-aspartate(out). The enzyme catalyses L-tryptophan(out) + L-aspartate(in) = L-tryptophan(in) + L-aspartate(out). Its function is as follows. Associates with SLC3A1/rBAT to form a functional heterodimeric complex that transports anionic and neutral amino acids across the apical plasma membrane of renal epithelium. Preferentially mediates exchange transport, but can also operate via facilitated diffusion. May act as a major transporter for L-cystine in late proximal tubules, ensuring its reabsorption from the luminal fluid in exchange for cytosolic L-glutamate or L-aspartate. The sequence is that of Solute carrier family 7 member 13 from Mus musculus (Mouse).